The sequence spans 173 residues: Chorion class B protein Ld32 (173 aa).

Positions 1-7 (FVQSALS) are cleaved as a signal peptide.

The protein belongs to the chorion protein family.

Its function is as follows. This protein is one of many from the eggshell of the gypsy moth. In Lymantria dispar (Gypsy moth), this protein is Chorion class B protein Ld32.